A 259-amino-acid polypeptide reads, in one-letter code: Probable 6-phosphogluconolactonase 2 (259 aa).

This sequence belongs to the glucosamine/galactosamine-6-phosphate isomerase family. 6-phosphogluconolactonase subfamily.

The protein localises to the cytoplasm. The protein resides in the cytosol. It catalyses the reaction 6-phospho-D-glucono-1,5-lactone + H2O = 6-phospho-D-gluconate + H(+). The protein operates within carbohydrate degradation; pentose phosphate pathway; D-ribulose 5-phosphate from D-glucose 6-phosphate (oxidative stage): step 2/3. In terms of biological role, catalyzes the hydrolysis of 6-phosphogluconolactone to 6-phosphogluconate. This chain is Probable 6-phosphogluconolactonase 2, found in Arabidopsis thaliana (Mouse-ear cress).